We begin with the raw amino-acid sequence, 155 residues long: Cyanate hydratase (155 aa).

Catalysis depends on residues arginine 92, glutamate 95, and serine 118.

Belongs to the cyanase family.

The enzyme catalyses cyanate + hydrogencarbonate + 3 H(+) = NH4(+) + 2 CO2. In terms of biological role, catalyzes the reaction of cyanate with bicarbonate to produce ammonia and carbon dioxide. This is Cyanate hydratase from Mycobacterium avium (strain 104).